We begin with the raw amino-acid sequence, 380 residues long: tRNA pseudouridine synthase B (380 aa).

The Nucleophile role is filled by aspartate 63. The disordered stretch occupies residues 309–339; sequence QNVEDDNDDNDDNDDNDDNDDNDDNDDNDDN. Residues 311–338 show a composition bias toward acidic residues; it reads VEDDNDDNDDNDDNDDNDDNDDNDDNDD.

The protein belongs to the pseudouridine synthase TruB family. Type 1 subfamily.

It carries out the reaction uridine(55) in tRNA = pseudouridine(55) in tRNA. Responsible for synthesis of pseudouridine from uracil-55 in the psi GC loop of transfer RNAs. The protein is tRNA pseudouridine synthase B of Psychrobacter arcticus (strain DSM 17307 / VKM B-2377 / 273-4).